Here is a 200-residue protein sequence, read N- to C-terminus: MSQSNQPDSSVTQTQAEEAVRTLLRWAGEDPTREGLLDTPRRVAEAYGDWFSGYREEPREYLERTFEEVAGYDELIVLRDISYESHCEHHMAPIIGKVHVGYLPRGKVVGISKLARVVESYARRFQVQEKMTAQIAQCIQDVLQPLGVGVVVEGAHECMTTRGIHKRGVSMVTSKMLGTFREDARTRAEFLQFIEVGGKR.

Cysteine 87, histidine 90, and cysteine 158 together coordinate Zn(2+).

Belongs to the GTP cyclohydrolase I family. As to quaternary structure, toroid-shaped homodecamer, composed of two pentamers of five dimers.

The enzyme catalyses GTP + H2O = 7,8-dihydroneopterin 3'-triphosphate + formate + H(+). It functions in the pathway cofactor biosynthesis; 7,8-dihydroneopterin triphosphate biosynthesis; 7,8-dihydroneopterin triphosphate from GTP: step 1/1. In Xanthomonas euvesicatoria pv. vesicatoria (strain 85-10) (Xanthomonas campestris pv. vesicatoria), this protein is GTP cyclohydrolase 1.